A 152-amino-acid polypeptide reads, in one-letter code: Ribosome maturation factor RimP (152 aa).

This sequence belongs to the RimP family.

The protein resides in the cytoplasm. Its function is as follows. Required for maturation of 30S ribosomal subunits. In Salmonella arizonae (strain ATCC BAA-731 / CDC346-86 / RSK2980), this protein is Ribosome maturation factor RimP.